We begin with the raw amino-acid sequence, 547 residues long: Probable aquaporin-5 (547 aa).

Positions 1–13 (MSSSILNNRSARS) are enriched in polar residues. Residues 1-208 (MSSSILNNRS…DPRIPPNDRR (208 aa)) are disordered. Residues 1–269 (MSSSILNNRS…QWMNSNFKNH (269 aa)) lie on the Cytoplasmic side of the membrane. The segment covering 15-32 (PAGANPAFNPPAEASSSS) has biased composition (low complexity). Composition is skewed to basic and acidic residues over residues 152–169 (EYERYYRNEGRNDRDRYT) and 198–208 (DDPRIPPNDRR). Residues 270–290 (FVAGVGEFIGTTMFLFFAFAG) traverse the membrane as a helical segment. Topologically, residues 291–316 (TEVANIQADTTNRTTTGESTGSLNVS) are extracellular. N-linked (GlcNAc...) asparagine glycans are attached at residues asparagine 302 and asparagine 314. A helical membrane pass occupies residues 317–337 (KLLYISIIFGFSLMVNVWVFF). Residues 338–363 (RISGGLFNPAVTMAMLMVKAISVTRA) are Cytoplasmic-facing. The short motif at 345–347 (NPA) is the NPA 1 element. Residues 364–384 (IVLFLAQILGSMLASVVVRYL) form a helical membrane-spanning segment. At 385 to 400 (FPETFNVRTTLGGGAS) the chain is on the extracellular side. The helical transmembrane segment at 401–421 (LVQGVFIEALLTAELVFTIFM) threads the bilayer. Residues 422-428 (LAKEKHR) lie on the Cytoplasmic side of the membrane. The chain crosses the membrane as a helical span at residues 429–449 (ATFIAPVGIGLALFIAEMVGV). The Extracellular portion of the chain corresponds to 450-475 (QFTGGSLNPARSFGPCVITGSFDTEH). The short motif at 457–459 (NPA) is the NPA 2 element. A helical membrane pass occupies residues 476 to 496 (WIYWVGPAIGSLIAVCFYWFI). Topologically, residues 497-547 (KTLEYEMANPGADGDDLNDPTKNPEKRAEIQASKPVPTAAFGSGKTASILS) are cytoplasmic. Residues 510 to 547 (GDDLNDPTKNPEKRAEIQASKPVPTAAFGSGKTASILS) are disordered.

Belongs to the MIP/aquaporin (TC 1.A.8) family.

It is found in the membrane. It carries out the reaction H2O(in) = H2O(out). Functionally, probable water channel that may have redundant functions with FgAQP3. In Gibberella zeae (strain ATCC MYA-4620 / CBS 123657 / FGSC 9075 / NRRL 31084 / PH-1) (Wheat head blight fungus), this protein is Probable aquaporin-5.